A 124-amino-acid chain; its full sequence is Small ribosomal subunit protein uS12 (124 aa).

Residue D89 is modified to 3-methylthioaspartic acid.

Belongs to the universal ribosomal protein uS12 family. In terms of assembly, part of the 30S ribosomal subunit. Contacts proteins S8 and S17. May interact with IF1 in the 30S initiation complex.

With S4 and S5 plays an important role in translational accuracy. Its function is as follows. Interacts with and stabilizes bases of the 16S rRNA that are involved in tRNA selection in the A site and with the mRNA backbone. Located at the interface of the 30S and 50S subunits, it traverses the body of the 30S subunit contacting proteins on the other side and probably holding the rRNA structure together. The combined cluster of proteins S8, S12 and S17 appears to hold together the shoulder and platform of the 30S subunit. This Yersinia enterocolitica serotype O:8 / biotype 1B (strain NCTC 13174 / 8081) protein is Small ribosomal subunit protein uS12.